We begin with the raw amino-acid sequence, 453 residues long: Glutamyl-tRNA reductase (453 aa).

Substrate contacts are provided by residues 52 to 55 (TCNR), S105, 110 to 112 (EDQ), and Q116. Catalysis depends on C53, which acts as the Nucleophile. 184–189 (GAGEMA) provides a ligand contact to NADP(+). The segment covering 413-424 (PGLEPEPTELPT) has biased composition (low complexity). Residues 413-453 (PGLEPEPTELPTVPDGPEGVPEELRERMSSGMLEQFSTNDD) are disordered.

The protein belongs to the glutamyl-tRNA reductase family. As to quaternary structure, homodimer.

It carries out the reaction (S)-4-amino-5-oxopentanoate + tRNA(Glu) + NADP(+) = L-glutamyl-tRNA(Glu) + NADPH + H(+). It functions in the pathway porphyrin-containing compound metabolism; protoporphyrin-IX biosynthesis; 5-aminolevulinate from L-glutamyl-tRNA(Glu): step 1/2. Catalyzes the NADPH-dependent reduction of glutamyl-tRNA(Glu) to glutamate 1-semialdehyde (GSA). The sequence is that of Glutamyl-tRNA reductase from Natronomonas pharaonis (strain ATCC 35678 / DSM 2160 / CIP 103997 / JCM 8858 / NBRC 14720 / NCIMB 2260 / Gabara) (Halobacterium pharaonis).